Reading from the N-terminus, the 599-residue chain is NADH-quinone oxidoreductase subunit C/D (599 aa).

The segment at 1 to 189 (MTDLTTHDLA…DPFVLTKQKE (189 aa)) is NADH dehydrogenase I subunit C. Residues 213 to 599 (DFMFLNLGPN…IDFVMSDVDR (387 aa)) are NADH dehydrogenase I subunit D.

This sequence in the N-terminal section; belongs to the complex I 30 kDa subunit family. The protein in the C-terminal section; belongs to the complex I 49 kDa subunit family. In terms of assembly, NDH-1 is composed of 13 different subunits. Subunits NuoB, CD, E, F, and G constitute the peripheral sector of the complex.

The protein resides in the cell inner membrane. It carries out the reaction a quinone + NADH + 5 H(+)(in) = a quinol + NAD(+) + 4 H(+)(out). NDH-1 shuttles electrons from NADH, via FMN and iron-sulfur (Fe-S) centers, to quinones in the respiratory chain. The immediate electron acceptor for the enzyme in this species is believed to be ubiquinone. Couples the redox reaction to proton translocation (for every two electrons transferred, four hydrogen ions are translocated across the cytoplasmic membrane), and thus conserves the redox energy in a proton gradient. The polypeptide is NADH-quinone oxidoreductase subunit C/D (Pectobacterium carotovorum subsp. carotovorum (strain PC1)).